The following is a 163-amino-acid chain: Large ribosomal subunit protein uL15 (163 aa).

This sequence belongs to the universal ribosomal protein uL15 family. Part of the 50S ribosomal subunit.

In terms of biological role, binds to the 23S rRNA. The protein is Large ribosomal subunit protein uL15 of Orientia tsutsugamushi (strain Boryong) (Rickettsia tsutsugamushi).